We begin with the raw amino-acid sequence, 128 residues long: Large ribosomal subunit protein bL12 (128 aa).

It belongs to the bacterial ribosomal protein bL12 family. As to quaternary structure, homodimer. Part of the ribosomal stalk of the 50S ribosomal subunit. Forms a multimeric L10(L12)X complex, where L10 forms an elongated spine to which 2 to 4 L12 dimers bind in a sequential fashion. Binds GTP-bound translation factors.

Functionally, forms part of the ribosomal stalk which helps the ribosome interact with GTP-bound translation factors. Is thus essential for accurate translation. This Desulfovibrio desulfuricans (strain ATCC 27774 / DSM 6949 / MB) protein is Large ribosomal subunit protein bL12.